The following is a 359-amino-acid chain: B-cell differentiation antigen CD72 (359 aa).

Topologically, residues 1-95 are cytoplasmic; sequence MAEAITYADL…LPCRTTCLRY (95 aa). Phosphotyrosine; by LYN occurs at positions 7 and 39. A helical; Signal-anchor for type II membrane protein membrane pass occupies residues 96–116; the sequence is LLLGLLLTCLLLGVTAICLGV. Residues 117–359 lie on the Extracellular side of the membrane; that stretch reads RYLQVSQQLQ…CEMTAFRFPD (243 aa). An N-linked (GlcNAc...) asparagine glycan is attached at asparagine 136. A C-type lectin domain is found at 232 to 352; it reads CCPSGWIMHQ…RSSLPYICEM (121 aa). Disulfide bonds link cysteine 233–cysteine 244, cysteine 261–cysteine 350, and cysteine 325–cysteine 342.

As to quaternary structure, homodimer; disulfide-linked. Associates with CD5. Interacts (tyrosine phosphorylated) with PTPN6/SHP-1. Post-translationally, phosphorylated upon engagement of the B-cell receptor, probably by LYN or SYK. Phosphorylation at Tyr-7 is important for interaction with PTPN6/SHP-1. As to expression, pre-B-cells and B-cells but not terminally differentiated plasma cells.

The protein resides in the membrane. Functionally, co-receptor of B cell receptor (BCR) that plays both positive and negative roles on B-cell functions. Recognizes the Sm/ribonucleoprotein (RNP) self-antigen ligand, and coligation of CD72 and BCR inhibits BCR signaling. Mechanistically, ligand binding leads to the recruitment of PTPN6/SHP-1 to the BCR complex which is inhibitory to BCR signaling. Also acts as a ligand for CD5 and thereby plays a critical role in maintaining regulatory T and B-cell homeostasis. The protein is B-cell differentiation antigen CD72 (CD72) of Homo sapiens (Human).